The primary structure comprises 265 residues: Nitrogenase iron protein 2 (265 aa).

8-15 (GKGGIGKS) serves as a coordination point for ATP. A [4Fe-4S] cluster-binding site is contributed by Cys-91. Arg-94 carries the post-translational modification ADP-ribosylarginine; by dinitrogenase reductase ADP-ribosyltransferase. Cys-126 contributes to the [4Fe-4S] cluster binding site.

Belongs to the NifH/BchL/ChlL family. Homodimer. [4Fe-4S] cluster serves as cofactor. The reversible ADP-ribosylation of Arg-94 inactivates the nitrogenase reductase and regulates nitrogenase activity.

The catalysed reaction is N2 + 8 reduced [2Fe-2S]-[ferredoxin] + 16 ATP + 16 H2O = H2 + 8 oxidized [2Fe-2S]-[ferredoxin] + 2 NH4(+) + 16 ADP + 16 phosphate + 6 H(+). Functionally, the key enzymatic reactions in nitrogen fixation are catalyzed by the nitrogenase complex, which has 2 components: the iron protein and the molybdenum-iron protein. The chain is Nitrogenase iron protein 2 (nifH2) from Methanothermobacter thermautotrophicus (strain ATCC 29096 / DSM 1053 / JCM 10044 / NBRC 100330 / Delta H) (Methanobacterium thermoautotrophicum).